Consider the following 663-residue polypeptide: Transketolase 2 (663 aa).

Position 25 (His-25) interacts with substrate. Thiamine diphosphate contacts are provided by residues His-65 and 113 to 115 (GPL). Residue Asp-154 participates in Mg(2+) binding. Residues Gly-155 and Asn-184 each coordinate thiamine diphosphate. Residues Asn-184 and Ile-186 each contribute to the Mg(2+) site. Residues His-259, Arg-356, and Ser-383 each contribute to the substrate site. His-259 provides a ligand contact to thiamine diphosphate. Residue Glu-410 is the Proton donor of the active site. Phe-436 contacts thiamine diphosphate. Substrate contacts are provided by His-460, Asp-468, and Arg-519.

The protein belongs to the transketolase family. In terms of assembly, homodimer. Requires Mg(2+) as cofactor. The cofactor is Ca(2+). Mn(2+) is required as a cofactor. It depends on Co(2+) as a cofactor. Thiamine diphosphate serves as cofactor.

The catalysed reaction is D-sedoheptulose 7-phosphate + D-glyceraldehyde 3-phosphate = aldehydo-D-ribose 5-phosphate + D-xylulose 5-phosphate. In terms of biological role, catalyzes the transfer of a two-carbon ketol group from a ketose donor to an aldose acceptor, via a covalent intermediate with the cofactor thiamine pyrophosphate. The protein is Transketolase 2 (tkt2) of Aliivibrio fischeri (strain ATCC 700601 / ES114) (Vibrio fischeri).